Here is a 98-residue protein sequence, read N- to C-terminus: NADH-ubiquinone oxidoreductase chain 4L (98 aa).

3 helical membrane passes run 1 to 21 (MSLV…GLLM), 29 to 49 (SLLC…LMIL), and 61 to 81 (IILL…LVMV).

This sequence belongs to the complex I subunit 4L family. Core subunit of respiratory chain NADH dehydrogenase (Complex I) which is composed of 45 different subunits.

The protein resides in the mitochondrion inner membrane. It catalyses the reaction a ubiquinone + NADH + 5 H(+)(in) = a ubiquinol + NAD(+) + 4 H(+)(out). Its function is as follows. Core subunit of the mitochondrial membrane respiratory chain NADH dehydrogenase (Complex I) which catalyzes electron transfer from NADH through the respiratory chain, using ubiquinone as an electron acceptor. Part of the enzyme membrane arm which is embedded in the lipid bilayer and involved in proton translocation. This is NADH-ubiquinone oxidoreductase chain 4L (MT-ND4L) from Pantholops hodgsonii (Chiru).